The chain runs to 90 residues: Putative defensin-like protein 168 (90 aa).

The signal sequence occupies residues Met-1–Ala-27. Intrachain disulfides connect Cys-32-Cys-90, Cys-43-Cys-66, Cys-51-Cys-84, and Cys-64-Cys-86.

The protein belongs to the DEFL family.

The protein resides in the secreted. The sequence is that of Putative defensin-like protein 168 from Arabidopsis thaliana (Mouse-ear cress).